Consider the following 127-residue polypeptide: MIFRMTQNLRTGKLGEQMAAAYLEEAGYRILEQNYRCRFGEIDIIARDGDTIVFVEVKSRRSDKYGLPQLAVGPDKQMRISKISLFYLQTKRLDSYNARFDVVAVSLKPEGCRIELIKDAFELAYGR.

This sequence belongs to the UPF0102 family.

This chain is UPF0102 protein SYNAS_23220, found in Syntrophus aciditrophicus (strain SB).